We begin with the raw amino-acid sequence, 2067 residues long: MMPQKKRRRKKDIDFLALYEAELLNYASEDDEGELEHEYYKARVYEVVTATGDVRGAGTDANVFITLFGENGLSPKLQLTSKSKSAFEKGNVDVFRVRTNNVGLIYKVRIEHDNTGLNASWYLDHVIVTDMKRPHLRYYFNCNNWLSKVEGDRQWCRDLLASFNPMDMPRGNKYEVKVYTGDVIGAGTDADVFINIFGEYGDTGERRLENEKDNFEKGAEDRFILDAPDLGQLMKINVGHNNKGGSAGWFLSQIVIEDIGNKRKYDFPLNRWLALDEDDGKIQRDILVGGAETTAITYIVTVFTGDVRGAGTKSKIYLVMYGARGNKNSGKIFLEGGVFDRGRTDIFHIELAVLLSPLSRVSVGHGNVGVNRGWFCEKVVILCPFTGIQQTFPCSNWLDEKKADGLIERQLYEMVSLRKKRLKKFPWSLWVWTTDLKKAGTNSPIFIQIYGQKGRTDEILLNPNNKWFKPGIIEKFRIELPDLGRFYKIRVWHDKRSSGSGWHLERMTLMNTLNKDKYNFNCNRWLDANEDDNEIVREMTAEGPTVRRIMGMARYHVTVCTGELEGAGTDANVYLCLFGDVGDTGERLLYNCRNNTDLFEKGNADEFTIESVTMRNVRRVRIRHDGKGSGSGWYLDRVLVREEGQPESDNVEFPCLRWLDKDKDDGQLVRELLPSDSSATLKNFRYHISLKTGDVSGASTDSRVYIKLYGDKSDTIKQVLLVSDNNLKDYFERGRVDEFTLETLNIGNINRLVIGHDSTGMHASWFLGSVQIRVPRQGKQYTFPANRWLDKNQADGRLEVELYPSEVVEIQKLVHYEVEIWTGDVGGAGTSARVYMQIYGEKGKTEVLFLSSRSKVFERASKDTFQTDTFTIYAIDLGALTKIRIRHDNTGNRAGWFLDRIDITDMNNEITYYFPCQRWLAVEEDDGQLSRELLPVDESYVLPQSEEGRGGGDNNPLDNLALEQKDKSTTFSVTIKTGVKKNAGTDANVFITLFGTQDDTGMTLLKSSKTNSDKFERDSIEIFTVETLDLGDLWKVRLGHDNTGKAPGWFVDWVEVDAPSLGKCMTFPCGRWLAKNEDDGSIIRDLFHAELQTRLYTPFVPYEITLYTSDVFAAGTDANIFIIIYGCDAVCTQQKYLCTNKREQKQFFERKSASRFIVELEDVGEIIEKIRIGHNNTGMNPGWHCSHVDIRRLLPDKDGAETLTFPCDRWLATSEDDKKTIRELVPYDIFTEKYMKDGSLRQVYKEVEEPLDIVLYSVQIFTGNIPGAGTDAKVYITIYGDLGDTGERYLGKSENRTNKFERGTADTFIIEAADLGVIYKIKLRHDNSKWCADWYVEKVEIWNDTNEDEFLFLCGRWLSLKKEDGRLERLFYEKEYTGDRSSNCSSPADFWEIALSSKMADVDISTVTGPMADYVQEGPIIPYYVSVTTGKHKDAATDSRAFIFLIGEDDERSKRIWLDYPRGKRGFSRGSVEEFYVAGLDVGIIKKIELGHDGASPESCWLVEELCLAVPTQGTKYMLNCNCWLAKDRGDGITSRVFDLLDAMVVNIGVKVLYEMTVWTGDVVGGGTDSNIFMTLYGINGSTEEMQLDKKKARFEREQNDTFIMEILDIAPFTKMRIRIDGLGSRPEWFLERILLKNMNTGDLTMFYYGDWLSQRKGKKTLVCEMCAVIDEEEMMEWTSYTVAVKTSDILGAGTDANVFIIIFGENGDSGTLALKQSANWNKFERNNTDTFNFPDMLSLGHLCKLRVWHDNKGIFPGWHLSYVDVKDNSRDETFHFQCDCWLSKSEGDGQTVRDFACANNKICDELEETTYEIVIETGNGGETRENVWLILEGRKNRSKEFLMENSSRQRAFRKGTTDTFEFDSIYLGDIASLCVGHLAREDRFIPKRELAWHVKTITITEMEYGNVYFFNCDCLIPLKRKRKYFKVFEVTKTTESFASKVQSLVPVKYEVIVTTGYEPGAGTDANVFVTIFGANGDTGKRELKQKMRNLFERGSTDRFFLETLELGELRKVRLEHDSSGYCSGWLVEKVEVTNTSTGVATIFNCGRWLDKKRGDGLTWRDLFPSV.

15 consecutive PLAT domains span residues 43 to 160 (RVYE…RDLL), 172 to 287 (NKYE…RDIL), 296 to 412 (ITYI…RQLY), 425 to 540 (FPWS…REMT), 553 to 673 (ARYH…RELL), 684 to 803 (FRYH…VELY), 814 to 934 (VHYE…RELL), 969 to 1087 (TTFS…RDLF), 1100 to 1225 (VPYE…RELV), 1254 to 1372 (VLYS…RLFY), 1421 to 1539 (IPYY…RVFD), 1552 to 1667 (VLYE…CEMC), 1679 to 1797 (TSYT…RDFA), 1810 to 1931 (TTYE…VFEV), and 1948 to 2064 (VKYE…RDLF).

Its subcellular location is the cell projection. It localises to the stereocilium. In terms of biological role, involved in hearing. Required for normal function of hair cells in the inner ear. This is Lipoxygenase homology domain-containing protein 1 (LOXHD1) from Homo sapiens (Human).